We begin with the raw amino-acid sequence, 186 residues long: Peptidoglycan-recognition protein SD (186 aa).

An N-terminal signal peptide occupies residues 1–18 (MTWIGLLIVGLTAIAVQG). Residues 47-169 (AVIAHTAGGA…RQVSATKSPG (123 aa)) form the N-acetylmuramoyl-L-alanine amidase domain. Cysteine 57 and cysteine 63 are joined by a disulfide. Asparagine 181 carries N-linked (GlcNAc...) asparagine glycosylation.

Belongs to the N-acetylmuramoyl-L-alanine amidase 2 family. In terms of tissue distribution, in larvae, it is mainly expressed in fat body. Also expressed in uninduced hemocytes and mbn-2 cells.

The protein resides in the secreted. Its function is as follows. Peptidoglycan-recognition protein that plays a key role in innate immunity by binding to peptidoglycans (PGN) of Gram-positive bacteria and activating the Toll pathway. Has no activity against on Gram-negative bacteria and fungi. Shows some partial redundancy with PRPGP-SA in Gram-positive bacteria recognition. May act by activating the proteolytic cleavage of Spatzle and the subsequent activation of Toll pathway. Recognizes S.aureus PGN. The protein is Peptidoglycan-recognition protein SD (PGRP-SD) of Drosophila melanogaster (Fruit fly).